Here is a 336-residue protein sequence, read N- to C-terminus: MLQSLAGSSCVRLVERHRSAWCFGFLVLGYLLYLVFGAVVFSSVELPYEDLLRQELRKLKRRFLEEHECLSEQQLEQFLGRVLEASNYGVSVLSNASGNWNWDFTSALFFASTVLSTTGYGHTVPLSDGGKAFCIIYSVIGIPFTLLFLTAVVQRITVHVTRRPVLYFHIRWGFSKQVVAIVHAVLLGFVTVSCFFFIPAAVFSVLEDDWNFLESFYFCFISLSTIGLGDYVPGEGYNQKFRELYKIGITCYLLLGLIAMLVVLETFCELHELKKFRKMFYVKKDKDEDQVHIIEHDQLSFSSITDQAAGMKEDQKQNEPFVATQSSACVDGPANH.

Topologically, residues 1–20 are cytoplasmic; sequence MLQSLAGSSCVRLVERHRSA. Residues 21-41 form a helical membrane-spanning segment; sequence WCFGFLVLGYLLYLVFGAVVF. At 42 to 103 the chain is on the extracellular side; that stretch reads SSVELPYEDL…SNASGNWNWD (62 aa). A glycan (N-linked (GlcNAc...) asparagine) is linked at Asn95. The segment at residues 104 to 116 is an intramembrane region (helical); that stretch reads FTSALFFASTVLS. Residues 117-122 lie within the membrane without spanning it; it reads TTGYGH. The tract at residues 117–122 is selectivity filter 1; the sequence is TTGYGH. Over 123–132 the chain is Extracellular; sequence TVPLSDGGKA. The chain crosses the membrane as a helical span at residues 133-156; the sequence is FCIIYSVIGIPFTLLFLTAVVQRI. At 157 to 181 the chain is on the cytoplasmic side; sequence TVHVTRRPVLYFHIRWGFSKQVVAI. Residues 182–202 traverse the membrane as a helical segment; that stretch reads VHAVLLGFVTVSCFFFIPAAV. Residues 203 to 211 are Extracellular-facing; sequence FSVLEDDWN. The helical intramembrane region spans 212 to 224; sequence FLESFYFCFISLS. A selectivity filter 2 region spans residues 225-230; the sequence is TIGLGD. The stretch at 225–231 is an intramembrane region; it reads TIGLGDY. The Extracellular portion of the chain corresponds to 232–243; that stretch reads VPGEGYNQKFRE. The helical transmembrane segment at 244-267 threads the bilayer; that stretch reads LYKIGITCYLLLGLIAMLVVLETF. Residues 268–336 are Cytoplasmic-facing; it reads CELHELKKFR…SACVDGPANH (69 aa). Lys274 participates in a covalent cross-link: Glycyl lysine isopeptide (Lys-Gly) (interchain with G-Cter in SUMO). Residues 293–299 are important for intracellular retention in recycling endosomes; that stretch reads IIEHDQL. A Phosphoserine modification is found at Ser326.

Belongs to the two pore domain potassium channel (TC 1.A.1.8) family. In terms of assembly, homodimer; disulfide-linked. Heterodimer with KCNK2; disulfide-linked. In astrocytes, forms mostly heterodimeric potassium channels with KCNK2, with only a minor proportion of functional channels containing homodimeric KCNK1. Interacts with KCNK3 and KCNK9, forming functional heterodimeric channels. Interacts with GNG4. Identified in a complex with PSD and ARF6; interacts only with PSD that is bound to ARF6. Interacts with UBE2I. Post-translationally, sumoylation is controversial. Sumoylated by UBE2I. Not sumoylated when expressed in xenopus oocytes or mammalian cells. Sumoylation inactivates the channel, but does not interfere with expression at the cell membrane. Sumoylation of a single subunit is sufficient to silence the dimeric channel. Sumoylation of KCNK1 is sufficient to silence heterodimeric channels formed by KCNK1 and KCNK3 or KCNK9. Desumoylated by SENP1; this activates the channel. Desumoylated by SENP1; this strongly increases halothane-mediated activation of heterodimeric channels formed with KCNK9. SENP1 treatment has no effect. As to expression, detected in bronchial epithelial cells. Detected in heart left atrium and left ventricle. Detected in cardiac myocytes (at protein level). Widely expressed with high levels in heart, brain and kidney, and lower levels in colon, ovary, placenta, lung and liver. Highly expressed in cerebellum, and detected at lower levels in amygdala, caudate nucleus, brain cortex, hippocampus, putamen, substantia nigra, thalamus, dorsal root ganglion, spinal cord, pituitary, heart, kidney, lung, placenta, pancreas, stomach, small intestine, uterus and prostate. Detected in right and left heart ventricle and atrium, and in heart Purkinje fibers.

The protein localises to the cell membrane. The protein resides in the recycling endosome. It localises to the synaptic cell membrane. It is found in the cytoplasmic vesicle. Its subcellular location is the perikaryon. The protein localises to the cell projection. The protein resides in the dendrite. It localises to the apical cell membrane. The enzyme catalyses K(+)(in) = K(+)(out). It carries out the reaction NH4(+)(in) = NH4(+)(out). It catalyses the reaction Na(+)(in) = Na(+)(out). The catalysed reaction is Rb(+)(in) = Rb(+)(out). The enzyme catalyses Cs(+)(in) = Cs(+)(out). It carries out the reaction Li(+)(in) = Li(+)(out). It catalyses the reaction L-glutamate(out) = L-glutamate(in). The catalysed reaction is chloride(in) = chloride(out). Inhibited by Ba(2+) ions and quinidine. Inhibited by quinine. Is slightly inhibited by 10 mM tetraethylammonium (TEA), and only marginally inhibited by 4-aminopyridine, charybdotoxin and dendrotoxin. Lowering the extracellular pH to below 6.5 transiently activates the channel, and then inhibits channel activity. Inhibited when the intracellular pH is decreased down to pH 6.0, but this may be due to indirect effects. Functionally, ion channel that contributes to passive transmembrane potassium transport and to the regulation of the resting membrane potential in brain astrocytes, but also in kidney and in other tissues. Forms dimeric channels through which potassium ions pass in accordance with their electrochemical gradient. The channel is selective for K(+) ions at physiological potassium concentrations and at neutral pH, but becomes permeable to Na(+) at subphysiological K(+) levels and upon acidification of the extracellular medium. The homodimer has very low potassium channel activity, when expressed in heterologous systems, and can function as weakly inward rectifying potassium channel. Channel activity is modulated by activation of serotonin receptors. Heterodimeric channels containing KCNK1 and KCNK2 have much higher activity, and may represent the predominant form in astrocytes. Heterodimeric channels containing KCNK1 and KCNK3 or KCNK9 have much higher activity. Heterodimeric channels formed by KCNK1 and KCNK9 may contribute to halothane-sensitive currents. Mediates outward rectifying potassium currents in dentate gyrus granule cells and contributes to the regulation of their resting membrane potential. Contributes to the regulation of action potential firing in dentate gyrus granule cells and down-regulates their intrinsic excitability. In astrocytes, the heterodimer formed by KCNK1 and KCNK2 is required for rapid glutamate release in response to activation of G-protein coupled receptors, such as F2R and CNR1. Required for normal ion and water transport in the kidney. Contributes to the regulation of the resting membrane potential of pancreatic beta cells. The low channel activity of homodimeric KCNK1 may be due to sumoylation. The low channel activity may be due to rapid internalization from the cell membrane and retention in recycling endosomes. Permeable to monovalent cations with ion selectivity for K(+) &gt; Rb(+) &gt;&gt; NH4(+) &gt;&gt; Cs(+) = Na(+) = Li(+). This chain is Potassium channel subfamily K member 1 (KCNK1), found in Homo sapiens (Human).